Reading from the N-terminus, the 357-residue chain is MHMNICLLPGDGIGPEIVAQGTKVLDAVARRFGHTVSTSSALIGGAAIDATGSPLPDATVEACRTSDAVLLGAVGGPKWDDLPSEKRPEKGLLGIRKALGLFANLRPAALFPELAGACLLRADIAAAGLDLVVVRELTGDVYFGQPAGIETRDGLRTGFNTMIYDEDEVRRIARVAFDTARARKRRVCSVDKANVLATSRLWREVVEEVARDYPDVELSHMYVDNAAMQLVRWPAQFDVIVTGNLFGDILSDEAAVITGSIGMLPSASMGSGGPALFEPIHGSAPDIAGQDKANPIATILSVGMMLRLGFGLAAEADAIDAAVRRVLAEGYRTGDIMENGRTLVGTVSMGNLIAERI.

76–89 (GPKWDDLPSEKRPE) provides a ligand contact to NAD(+). Substrate is bound by residues arginine 96, arginine 106, arginine 135, and aspartate 224. Mg(2+) contacts are provided by aspartate 224, aspartate 248, and aspartate 252. 282–294 (GSAPDIAGQDKAN) is a binding site for NAD(+).

Belongs to the isocitrate and isopropylmalate dehydrogenases family. LeuB type 1 subfamily. In terms of assembly, homodimer. Mg(2+) serves as cofactor. Mn(2+) is required as a cofactor.

Its subcellular location is the cytoplasm. It carries out the reaction (2R,3S)-3-isopropylmalate + NAD(+) = 4-methyl-2-oxopentanoate + CO2 + NADH. It functions in the pathway amino-acid biosynthesis; L-leucine biosynthesis; L-leucine from 3-methyl-2-oxobutanoate: step 3/4. Its function is as follows. Catalyzes the oxidation of 3-carboxy-2-hydroxy-4-methylpentanoate (3-isopropylmalate) to 3-carboxy-4-methyl-2-oxopentanoate. The product decarboxylates to 4-methyl-2 oxopentanoate. The protein is 3-isopropylmalate dehydrogenase of Nitratidesulfovibrio vulgaris (strain ATCC 29579 / DSM 644 / CCUG 34227 / NCIMB 8303 / VKM B-1760 / Hildenborough) (Desulfovibrio vulgaris).